The chain runs to 204 residues: Protease (204 aa).

Active-site residues include histidine 54, aspartate 71, and cysteine 121.

Belongs to the peptidase C5 family. As to quaternary structure, interacts with protease cofactor pVI-C; this interaction is necessary for protease activation.

It localises to the virion. It is found in the host nucleus. It catalyses the reaction Cleaves proteins of the adenovirus and its host cell at two consensus sites: -Yaa-Xaa-Gly-Gly-|-Xaa- and -Yaa-Xaa-Gly-Xaa-|-Gly- (in which Yaa is Met, Ile or Leu, and Xaa is any amino acid).. Its activity is regulated as follows. Requires DNA and protease cofactor for maximal activation. Inside nascent virions, becomes partially activated by binding to the viral DNA, allowing it to cleave the cofactor that binds to the protease and fully activates it. Actin, like the viral protease cofactor, seems to act as a cofactor in the cleavage of cytokeratin 18 and of actin itself. In terms of biological role, cleaves viral precursor proteins (pTP, pIIIa, pVI, pVII, pVIII, and pX) inside newly assembled particles giving rise to mature virions. Protease complexed to its cofactor slides along the viral DNA to specifically locate and cleave the viral precursors. Mature virions have a weakened organization compared to the unmature virions, thereby facilitating subsequent uncoating. Without maturation, the particle lacks infectivity and is unable to uncoat. Late in adenovirus infection, in the cytoplasm, may participate in the cytoskeleton destruction. Cleaves host cell cytoskeletal keratins K7 and K18. The polypeptide is Protease (Frog adenovirus 1 (strain ATCC VR-896) (FrAdV-1)).